Reading from the N-terminus, the 192-residue chain is MEPLEFHSGKVCPLNRANVDTDQIIPKQFLKRIERTGFGQFLFFHWRFNDDGTERSDFVLNDPDYKGSSILVAGDNFGCGSSREHAPWALADYGFKVIIAPDFADIFYNNALKNGILVIKMDEQQVKSWMQKAVDGLTLDVDLKQQTIQASDGTITSFDITPYQREKLINGWDDIALTLLKEEKIAAYESAN.

This sequence belongs to the LeuD family. LeuD type 1 subfamily. As to quaternary structure, heterodimer of LeuC and LeuD.

The catalysed reaction is (2R,3S)-3-isopropylmalate = (2S)-2-isopropylmalate. The protein operates within amino-acid biosynthesis; L-leucine biosynthesis; L-leucine from 3-methyl-2-oxobutanoate: step 2/4. Catalyzes the isomerization between 2-isopropylmalate and 3-isopropylmalate, via the formation of 2-isopropylmaleate. This is 3-isopropylmalate dehydratase small subunit from Oceanobacillus iheyensis (strain DSM 14371 / CIP 107618 / JCM 11309 / KCTC 3954 / HTE831).